Consider the following 240-residue polypeptide: 4-hydroxy-tetrahydrodipicolinate reductase (240 aa).

NAD(+) is bound by residues 79 to 81 (ATT) and 103 to 106 (SANM). His135 (proton donor/acceptor) is an active-site residue. His136 is a binding site for (S)-2,3,4,5-tetrahydrodipicolinate. Lys139 serves as the catalytic Proton donor. (S)-2,3,4,5-tetrahydrodipicolinate is bound at residue 145–146 (GT).

It belongs to the DapB family.

The protein localises to the cytoplasm. It catalyses the reaction (S)-2,3,4,5-tetrahydrodipicolinate + NAD(+) + H2O = (2S,4S)-4-hydroxy-2,3,4,5-tetrahydrodipicolinate + NADH + H(+). It carries out the reaction (S)-2,3,4,5-tetrahydrodipicolinate + NADP(+) + H2O = (2S,4S)-4-hydroxy-2,3,4,5-tetrahydrodipicolinate + NADPH + H(+). The protein operates within amino-acid biosynthesis; L-lysine biosynthesis via DAP pathway; (S)-tetrahydrodipicolinate from L-aspartate: step 4/4. Functionally, catalyzes the conversion of 4-hydroxy-tetrahydrodipicolinate (HTPA) to tetrahydrodipicolinate. In Staphylococcus aureus (strain bovine RF122 / ET3-1), this protein is 4-hydroxy-tetrahydrodipicolinate reductase.